An 813-amino-acid polypeptide reads, in one-letter code: Hyaluronate lyase HylB (813 aa).

The segment at residues 1-32 (MFGTPSRRTFLTASALSAMALAASPTVTDAIA) is a signal peptide (tat-type signal). Catalysis depends on residues Asn222, His272, and Tyr281.

The protein belongs to the polysaccharide lyase 8 family. Post-translationally, predicted to be exported by the Tat system. The position of the signal peptide cleavage has not been experimentally proven.

The protein resides in the secreted. It catalyses the reaction [hyaluronan](n) = n 3-(4-deoxy-beta-D-gluc-4-enuronosyl)-N-acetyl-D-glucosamine + H2O. In terms of biological role, degrades hyaluronic acid (HA) exclusively into HA disaccharides (HA-2). Produced HA-2s confer anti-inflammatory properties leading to reduced immunopathology in the mouse model of acne. The sequence is that of Hyaluronate lyase HylB from Cutibacterium acnes (strain DSM 16379 / KPA171202) (Propionibacterium acnes).